The sequence spans 364 residues: 3-isopropylmalate dehydrogenase (364 aa).

79–92 (GPKWEHLPPDQQPE) contacts NAD(+). Residues Arg100, Arg110, Arg139, and Asp228 each contribute to the substrate site. Mg(2+)-binding residues include Asp228, Asp252, and Asp256. 286–298 (GSAPDIAGKNIAN) serves as a coordination point for NAD(+).

The protein belongs to the isocitrate and isopropylmalate dehydrogenases family. LeuB type 1 subfamily. Homodimer. Requires Mg(2+) as cofactor. The cofactor is Mn(2+).

It is found in the cytoplasm. It catalyses the reaction (2R,3S)-3-isopropylmalate + NAD(+) = 4-methyl-2-oxopentanoate + CO2 + NADH. It participates in amino-acid biosynthesis; L-leucine biosynthesis; L-leucine from 3-methyl-2-oxobutanoate: step 3/4. In terms of biological role, catalyzes the oxidation of 3-carboxy-2-hydroxy-4-methylpentanoate (3-isopropylmalate) to 3-carboxy-4-methyl-2-oxopentanoate. The product decarboxylates to 4-methyl-2 oxopentanoate. In Escherichia coli (strain UTI89 / UPEC), this protein is 3-isopropylmalate dehydrogenase.